The sequence spans 529 residues: Bifunctional purine biosynthesis protein PurH (529 aa).

One can recognise an MGS-like domain in the interval 1 to 148 (MQQRRPVRRA…KNHKDVAIVV (148 aa)).

This sequence belongs to the PurH family.

It catalyses the reaction (6R)-10-formyltetrahydrofolate + 5-amino-1-(5-phospho-beta-D-ribosyl)imidazole-4-carboxamide = 5-formamido-1-(5-phospho-D-ribosyl)imidazole-4-carboxamide + (6S)-5,6,7,8-tetrahydrofolate. The catalysed reaction is IMP + H2O = 5-formamido-1-(5-phospho-D-ribosyl)imidazole-4-carboxamide. It participates in purine metabolism; IMP biosynthesis via de novo pathway; 5-formamido-1-(5-phospho-D-ribosyl)imidazole-4-carboxamide from 5-amino-1-(5-phospho-D-ribosyl)imidazole-4-carboxamide (10-formyl THF route): step 1/1. The protein operates within purine metabolism; IMP biosynthesis via de novo pathway; IMP from 5-formamido-1-(5-phospho-D-ribosyl)imidazole-4-carboxamide: step 1/1. This chain is Bifunctional purine biosynthesis protein PurH, found in Citrobacter koseri (strain ATCC BAA-895 / CDC 4225-83 / SGSC4696).